A 389-amino-acid polypeptide reads, in one-letter code: Lipid-A-disaccharide synthase (389 aa).

It belongs to the LpxB family.

The catalysed reaction is a lipid X + a UDP-2-N,3-O-bis[(3R)-3-hydroxyacyl]-alpha-D-glucosamine = a lipid A disaccharide + UDP + H(+). The protein operates within bacterial outer membrane biogenesis; LPS lipid A biosynthesis. In terms of biological role, condensation of UDP-2,3-diacylglucosamine and 2,3-diacylglucosamine-1-phosphate to form lipid A disaccharide, a precursor of lipid A, a phosphorylated glycolipid that anchors the lipopolysaccharide to the outer membrane of the cell. This chain is Lipid-A-disaccharide synthase, found in Burkholderia lata (strain ATCC 17760 / DSM 23089 / LMG 22485 / NCIMB 9086 / R18194 / 383).